A 1373-amino-acid polypeptide reads, in one-letter code: DNA-directed RNA polymerase subunit beta (1373 aa).

The protein belongs to the RNA polymerase beta chain family. In terms of assembly, the RNAP catalytic core consists of 2 alpha, 1 beta, 1 beta' and 1 omega subunit. When a sigma factor is associated with the core the holoenzyme is formed, which can initiate transcription.

It carries out the reaction RNA(n) + a ribonucleoside 5'-triphosphate = RNA(n+1) + diphosphate. Functionally, DNA-dependent RNA polymerase catalyzes the transcription of DNA into RNA using the four ribonucleoside triphosphates as substrates. In Rickettsia canadensis (strain McKiel), this protein is DNA-directed RNA polymerase subunit beta.